The chain runs to 252 residues: Small ribosomal subunit protein uS3 (252 aa).

The 73-residue stretch at 39–111 (IRKLINNFTK…DVNLNVLEVK (73 aa)) folds into the KH type-2 domain. The segment at 222–252 (KPFASQSSNTPNRRPRNFKGGNNNHVNAKKN) is disordered. A compositionally biased stretch (polar residues) spans 241-252 (GGNNNHVNAKKN).

The protein belongs to the universal ribosomal protein uS3 family. As to quaternary structure, part of the 30S ribosomal subunit. Forms a tight complex with proteins S10 and S14.

Binds the lower part of the 30S subunit head. Binds mRNA in the 70S ribosome, positioning it for translation. This Onion yellows phytoplasma (strain OY-M) protein is Small ribosomal subunit protein uS3.